Here is a 77-residue protein sequence, read N- to C-terminus: Large ribosomal subunit protein eL20 (77 aa).

It belongs to the eukaryotic ribosomal protein eL20 family. In terms of assembly, part of the 50S ribosomal subunit. Binds 23S rRNA.

This chain is Large ribosomal subunit protein eL20, found in Pyrococcus horikoshii (strain ATCC 700860 / DSM 12428 / JCM 9974 / NBRC 100139 / OT-3).